The sequence spans 714 residues: Fatty acid oxidation complex subunit alpha (714 aa).

The interval 1–190 is enoyl-CoA hydratase; it reads MEMTSAFTLN…KLGLVDDVVP (190 aa). The tract at residues 306–714 is 3-hydroxyacyl-CoA dehydrogenase; sequence APLNSVGILG…FWKTTATDLQ (409 aa).

The protein in the N-terminal section; belongs to the enoyl-CoA hydratase/isomerase family. This sequence in the central section; belongs to the 3-hydroxyacyl-CoA dehydrogenase family. As to quaternary structure, heterotetramer of two alpha chains (FadJ) and two beta chains (FadI).

Its subcellular location is the cytoplasm. The catalysed reaction is a (3S)-3-hydroxyacyl-CoA = a (2E)-enoyl-CoA + H2O. The enzyme catalyses a 4-saturated-(3S)-3-hydroxyacyl-CoA = a (3E)-enoyl-CoA + H2O. It carries out the reaction a (3S)-3-hydroxyacyl-CoA + NAD(+) = a 3-oxoacyl-CoA + NADH + H(+). It catalyses the reaction (3S)-3-hydroxybutanoyl-CoA = (3R)-3-hydroxybutanoyl-CoA. It functions in the pathway lipid metabolism; fatty acid beta-oxidation. Its function is as follows. Catalyzes the formation of a hydroxyacyl-CoA by addition of water on enoyl-CoA. Also exhibits 3-hydroxyacyl-CoA epimerase and 3-hydroxyacyl-CoA dehydrogenase activities. Strongly involved in the anaerobic degradation of long and medium-chain fatty acids in the presence of nitrate and weakly involved in the aerobic degradation of long-chain fatty acids. This chain is Fatty acid oxidation complex subunit alpha (fadJ), found in Escherichia coli (strain K12).